Reading from the N-terminus, the 501-residue chain is Ribose import ATP-binding protein RbsA (501 aa).

ABC transporter domains lie at 8–245 and 255–500; these read LKMV…VGRT and VKKG…VGIN. An ATP-binding site is contributed by 40–47; sequence GENGAGKS.

This sequence belongs to the ABC transporter superfamily. Ribose importer (TC 3.A.1.2.1) family. The complex is composed of an ATP-binding protein (RbsA), two transmembrane proteins (RbsC) and a solute-binding protein (RbsB).

The protein resides in the cell membrane. The catalysed reaction is D-ribose(out) + ATP + H2O = D-ribose(in) + ADP + phosphate + H(+). Functionally, part of the ABC transporter complex RbsABC involved in ribose import. Responsible for energy coupling to the transport system. In Clostridium perfringens (strain 13 / Type A), this protein is Ribose import ATP-binding protein RbsA.